The sequence spans 152 residues: Protein-export protein SecB (152 aa).

Belongs to the SecB family. In terms of assembly, homotetramer, a dimer of dimers. One homotetramer interacts with 1 SecA dimer.

The protein localises to the cytoplasm. In terms of biological role, one of the proteins required for the normal export of preproteins out of the cell cytoplasm. It is a molecular chaperone that binds to a subset of precursor proteins, maintaining them in a translocation-competent state. It also specifically binds to its receptor SecA. In Rickettsia akari (strain Hartford), this protein is Protein-export protein SecB.